Reading from the N-terminus, the 545-residue chain is CTP synthase (545 aa).

The tract at residues 1 to 266 (MKTNYIFVTG…DDYICKRFSL (266 aa)) is amidoligase domain. Ser-14 contacts CTP. Residue Ser-14 coordinates UTP. Residues 15–20 (SLGKGI) and Asp-72 each bind ATP. Residues Asp-72 and Glu-140 each coordinate Mg(2+). CTP is bound by residues 147–149 (DIE), 187–192 (KTKPTQ), and Lys-223. UTP-binding positions include 187–192 (KTKPTQ) and Lys-223. 239–241 (KDV) is a binding site for ATP. The region spanning 291 to 542 (TIGMVGKYVE…VKAAFDYQKG (252 aa)) is the Glutamine amidotransferase type-1 domain. Gly-352 contributes to the L-glutamine binding site. Cys-379 acts as the Nucleophile; for glutamine hydrolysis in catalysis. Residues 380–383 (LGMQ), Glu-403, and Arg-470 contribute to the L-glutamine site. Active-site residues include His-515 and Glu-517.

The protein belongs to the CTP synthase family. As to quaternary structure, homotetramer.

It carries out the reaction UTP + L-glutamine + ATP + H2O = CTP + L-glutamate + ADP + phosphate + 2 H(+). The enzyme catalyses L-glutamine + H2O = L-glutamate + NH4(+). It catalyses the reaction UTP + NH4(+) + ATP = CTP + ADP + phosphate + 2 H(+). Its pathway is pyrimidine metabolism; CTP biosynthesis via de novo pathway; CTP from UDP: step 2/2. With respect to regulation, allosterically activated by GTP, when glutamine is the substrate; GTP has no effect on the reaction when ammonia is the substrate. The allosteric effector GTP functions by stabilizing the protein conformation that binds the tetrahedral intermediate(s) formed during glutamine hydrolysis. Inhibited by the product CTP, via allosteric rather than competitive inhibition. Catalyzes the ATP-dependent amination of UTP to CTP with either L-glutamine or ammonia as the source of nitrogen. Regulates intracellular CTP levels through interactions with the four ribonucleotide triphosphates. This chain is CTP synthase, found in Proteus mirabilis (strain HI4320).